The following is a 284-amino-acid chain: MTILDGKKLSEKIKDNLKKEVDELKTKGITPGLAVILVGDDPASHTYVKMKRNACQKVGIYSVVHEFPESITEKELLSTIKMINENPNIHGLLIQLPLPKHIDTTKILEAVDPSKDVDGFHPYNMGRLVEGLDTFAPCTPLGVMEIFEEYEIDLKGKDVCVVGASNIVGKPMWALLVNAWATVDICHIETKDLAAHTKRADIVIVGVGKPNLITADMVKDGVIVIDIGINRLEDGRLVGDVDFENVSKKASYITPVPGGVGPMTIAMLLKNTVKAAKNFAKEVK.

Residues 163–165 (GAS), Ile188, and Ile229 each bind NADP(+).

Belongs to the tetrahydrofolate dehydrogenase/cyclohydrolase family. In terms of assembly, homodimer.

It carries out the reaction (6R)-5,10-methylene-5,6,7,8-tetrahydrofolate + NADP(+) = (6R)-5,10-methenyltetrahydrofolate + NADPH. The enzyme catalyses (6R)-5,10-methenyltetrahydrofolate + H2O = (6R)-10-formyltetrahydrofolate + H(+). The protein operates within one-carbon metabolism; tetrahydrofolate interconversion. Its function is as follows. Catalyzes the oxidation of 5,10-methylenetetrahydrofolate to 5,10-methenyltetrahydrofolate and then the hydrolysis of 5,10-methenyltetrahydrofolate to 10-formyltetrahydrofolate. The chain is Bifunctional protein FolD from Nautilia profundicola (strain ATCC BAA-1463 / DSM 18972 / AmH).